The chain runs to 499 residues: Glycerol kinase (499 aa).

An ADP-binding site is contributed by threonine 13. Residues threonine 13, threonine 14, and serine 15 each coordinate ATP. A sn-glycerol 3-phosphate-binding site is contributed by threonine 13. Arginine 17 serves as a coordination point for ADP. 4 residues coordinate sn-glycerol 3-phosphate: arginine 83, glutamate 84, tyrosine 135, and aspartate 244. 5 residues coordinate glycerol: arginine 83, glutamate 84, tyrosine 135, aspartate 244, and glutamine 245. ADP-binding residues include threonine 266 and glycine 309. Residues threonine 266, glycine 309, glutamine 313, and glycine 410 each contribute to the ATP site. Glycine 410 and asparagine 414 together coordinate ADP.

The protein belongs to the FGGY kinase family.

The enzyme catalyses glycerol + ATP = sn-glycerol 3-phosphate + ADP + H(+). It functions in the pathway polyol metabolism; glycerol degradation via glycerol kinase pathway; sn-glycerol 3-phosphate from glycerol: step 1/1. Inhibited by fructose 1,6-bisphosphate (FBP). Functionally, key enzyme in the regulation of glycerol uptake and metabolism. Catalyzes the phosphorylation of glycerol to yield sn-glycerol 3-phosphate. In Paraburkholderia xenovorans (strain LB400), this protein is Glycerol kinase.